We begin with the raw amino-acid sequence, 258 residues long: MVLIRVLANLLILQLSYAQKSPELVVGGDECNINEHRSLVAIFNSTGFFCSGTLINQEWVVTAAHCDSNNFKMKFGAHSQKVLNEDEQIRNPKEKFICPNKKNNEVLDKDIMLIKLDSSVSNSEHIAPLSLPSSPPSVGSVCRIMGWGSITPTKVTYPDVPYCANINLLDDAECKPGYPELLPEYRTLCAGIVQGGKDTCGGDSGGPLICNGQFHGIVSYGAHPCGQSLKPGIYTTVFDYNDWIKSIIAGNTAATCPP.

Positions 1–18 (MVLIRVLANLLILQLSYA) are cleaved as a signal peptide. Residues 19–24 (QKSPEL) constitute a propeptide that is removed on maturation. Positions 25 to 249 (VVGGDECNIN…YNDWIKSIIA (225 aa)) constitute a Peptidase S1 domain. Intrachain disulfides connect Cys-31–Cys-163, Cys-50–Cys-66, Cys-98–Cys-256, Cys-142–Cys-210, Cys-174–Cys-189, and Cys-200–Cys-225. The N-linked (GlcNAc...) asparagine glycan is linked to Asn-44. Active-site charge relay system residues include His-65 and Asp-110. Ser-204 functions as the Charge relay system in the catalytic mechanism.

Belongs to the peptidase S1 family. Snake venom subfamily. In terms of assembly, monomer. Expressed by the venom gland.

It localises to the secreted. Its function is as follows. Snake venom serine protease that may act in the hemostasis system of the prey. The protein is Snake venom serine protease PA of Trimeresurus stejnegeri (Chinese green tree viper).